A 305-amino-acid chain; its full sequence is Protein ORANGE, chloroplastic (305 aa).

A chloroplast-targeting transit peptide spans 1–54 (MSCLGRILSVSYPPDPYGSRLSVSKLSSPGRNRRLRWRFTALDSDSSSLDSDSS). The next 2 helical transmembrane spans lie at 144–164 (VYYA…GLLA) and 197–217 (IVAS…VVEV). The CR-type-like stretch occupies residues 206 to 297 (VGVISALMVV…CTGMAMASEH (92 aa)). One copy of the CXXCXGXG motif repeat lies at 228–235 (CKYCLGTG). The CXXCXXXG motif repeat unit spans residues 239–246 (CARCSSTG). Residues 272-279 (CSNCSGAG) form a CXXCXGXG motif repeat. The CXXCXXXG motif repeat unit spans residues 283 to 290 (CPTCLCTG).

Belongs to the orange-like family. In terms of assembly, interacts with ERF1-2. Expressed in young leaves, curds and flower buds.

Its subcellular location is the plastid. It is found in the chloroplast membrane. The protein localises to the nucleus. Its function is as follows. Involved in chromoplast differentiation. Is associated with a cellular process that triggers the differentiation of pro-plastids or other non-colored plastids into chromoplasts for carotenoid accumulation. Associated with carotenoid accumulation in de-etiolated cotyledons. Controls leaf petiole elongation by suppressing the expression of ERF1 genes. The polypeptide is Protein ORANGE, chloroplastic (Brassica oleracea var. botrytis (Cauliflower)).